The following is a 216-amino-acid chain: Ribosomal RNA small subunit methyltransferase G (216 aa).

S-adenosyl-L-methionine is bound by residues Gly-81, Phe-86, 130–131, and Arg-144; that span reads AE.

It belongs to the methyltransferase superfamily. RNA methyltransferase RsmG family.

Its subcellular location is the cytoplasm. It catalyses the reaction guanosine(527) in 16S rRNA + S-adenosyl-L-methionine = N(7)-methylguanosine(527) in 16S rRNA + S-adenosyl-L-homocysteine. Specifically methylates the N7 position of guanine in position 527 of 16S rRNA. The sequence is that of Ribosomal RNA small subunit methyltransferase G from Rhodospirillum centenum (strain ATCC 51521 / SW).